Reading from the N-terminus, the 72-residue chain is V-type proton ATPase subunit e (72 aa).

Topologically, residues 1–2 (MS) are lumenal. Residues 3-23 (FYTVVATFLSVVLASAVFWVL) traverse the membrane as a helical segment. Over 24–34 (APKENQTVWRS) the chain is Cytoplasmic. A helical membrane pass occupies residues 35–55 (TIILSMSMMFLMWAVTYLSQL). Residues 56-72 (HPLVVPRRSDLRPEFAE) lie on the Lumenal side of the membrane.

The protein belongs to the V-ATPase e1/e2 subunit family. As to quaternary structure, V-ATPase is a heteromultimeric enzyme composed of a peripheral catalytic V1 complex (components A to H) attached to an integral membrane V0 proton pore complex (components: a, c, c', c'', d, e, f and VOA1).

The protein resides in the vacuole membrane. In terms of biological role, subunit of the V0 complex of vacuolar(H+)-ATPase (V-ATPase), a multisubunit enzyme composed of a peripheral complex (V1) that hydrolyzes ATP and a membrane integral complex (V0) that translocates protons. V-ATPase is responsible for acidifying and maintaining the pH of intracellular compartments. The chain is V-type proton ATPase subunit e (VMA9) from Eremothecium gossypii (strain ATCC 10895 / CBS 109.51 / FGSC 9923 / NRRL Y-1056) (Yeast).